The primary structure comprises 215 residues: GTP-binding protein YPT6 (215 aa).

Glycine 17–threonine 24 lines the GTP pocket. The Effector region motif lies at tyrosine 39–phenylalanine 47. GTP is bound by residues aspartate 65–glutamine 69 and asparagine 124–aspartate 127. Over residues asparagine 178–lysine 196 the composition is skewed to polar residues. Positions asparagine 178–cysteine 215 are disordered. 2 S-geranylgeranyl cysteine lipidation sites follow: cysteine 213 and cysteine 215. Cysteine 215 bears the Cysteine methyl ester mark.

It belongs to the small GTPase superfamily. Rab family. As to quaternary structure, interacts with YIF1, YIP3 and YIP4.

Its subcellular location is the cell membrane. Functionally, protein transport. Might participate in post-Golgi transport. In Saccharomyces cerevisiae (strain ATCC 204508 / S288c) (Baker's yeast), this protein is GTP-binding protein YPT6 (YPT6).